Consider the following 447-residue polypeptide: MREIVHLQTGQCGNQIGAAFWQTISGEHGLDGDGQYNGTSDLQLERMNVYFNHASGDKYVPRAVLVDLEPGTMDAVRSGPFGKLFRPDNFVFGQSGAGNNWAKGHYTEGAELVDQVLDVVRREAEGCDCLQGFQITHSLGGGTGAGMGTLLISKIREEFPDRMMATFSVVPSPKVSDTVVEPYNATLSVHQLVEHSDETFCIDNEALYDICMRTLKLSQPSYGDLNHLVSAVMSGVTTSLRFPGQLNSDLRKLAVNMVPFPRLHFFMVGFAPLTSRGGSSYRQVSVPELTQQMFDPKNMMAASDFRNGRYLTCSALFRGKISMKEVEDQMRNIQNKNQSYFVEWIPNNVQTALCSVPPRGLKMSSTFVGNSTSIQELFKRVGDQFAAMFRRKAFLHWYTGEGMDEMEFTEAESNMNDLVSEYQQYQEASVSEGEEEYLAEDIVDEEV.

GTP is bound by residues Gln-11, Glu-69, Ser-138, Gly-142, Thr-143, Gly-144, Asn-204, and Asn-226. Glu-69 is a Mg(2+) binding site.

Belongs to the tubulin family. In terms of assembly, dimer of alpha and beta chains. A typical microtubule is a hollow water-filled tube with an outer diameter of 25 nm and an inner diameter of 15 nM. Alpha-beta heterodimers associate head-to-tail to form protofilaments running lengthwise along the microtubule wall with the beta-tubulin subunit facing the microtubule plus end conferring a structural polarity. Microtubules usually have 13 protofilaments but different protofilament numbers can be found in some organisms and specialized cells. The cofactor is Mg(2+).

Its subcellular location is the cytoplasm. It localises to the cytoskeleton. In terms of biological role, tubulin is the major constituent of microtubules, a cylinder consisting of laterally associated linear protofilaments composed of alpha- and beta-tubulin heterodimers. Microtubules grow by the addition of GTP-tubulin dimers to the microtubule end, where a stabilizing cap forms. Below the cap, tubulin dimers are in GDP-bound state, owing to GTPase activity of alpha-tubulin. In Penicillium digitatum (Green mold), this protein is Tubulin beta chain (TUB2).